Here is a 195-residue protein sequence, read N- to C-terminus: Imidazoleglycerol-phosphate dehydratase (195 aa).

Belongs to the imidazoleglycerol-phosphate dehydratase family.

The protein localises to the cytoplasm. The catalysed reaction is D-erythro-1-(imidazol-4-yl)glycerol 3-phosphate = 3-(imidazol-4-yl)-2-oxopropyl phosphate + H2O. The protein operates within amino-acid biosynthesis; L-histidine biosynthesis; L-histidine from 5-phospho-alpha-D-ribose 1-diphosphate: step 6/9. The chain is Imidazoleglycerol-phosphate dehydratase from Burkholderia cenocepacia (strain ATCC BAA-245 / DSM 16553 / LMG 16656 / NCTC 13227 / J2315 / CF5610) (Burkholderia cepacia (strain J2315)).